We begin with the raw amino-acid sequence, 293 residues long: Phosphatidylserine decarboxylase proenzyme (293 aa).

Residues Asp88, His144, and Ser247 each act as charge relay system; for autoendoproteolytic cleavage activity in the active site. The active-site Schiff-base intermediate with substrate; via pyruvic acid; for decarboxylase activity is Ser247. Pyruvic acid (Ser); by autocatalysis is present on Ser247.

The protein belongs to the phosphatidylserine decarboxylase family. PSD-B subfamily. Prokaryotic type I sub-subfamily. Heterodimer of a large membrane-associated beta subunit and a small pyruvoyl-containing alpha subunit. The cofactor is pyruvate. Is synthesized initially as an inactive proenzyme. Formation of the active enzyme involves a self-maturation process in which the active site pyruvoyl group is generated from an internal serine residue via an autocatalytic post-translational modification. Two non-identical subunits are generated from the proenzyme in this reaction, and the pyruvate is formed at the N-terminus of the alpha chain, which is derived from the carboxyl end of the proenzyme. The autoendoproteolytic cleavage occurs by a canonical serine protease mechanism, in which the side chain hydroxyl group of the serine supplies its oxygen atom to form the C-terminus of the beta chain, while the remainder of the serine residue undergoes an oxidative deamination to produce ammonia and the pyruvoyl prosthetic group on the alpha chain. During this reaction, the Ser that is part of the protease active site of the proenzyme becomes the pyruvoyl prosthetic group, which constitutes an essential element of the active site of the mature decarboxylase.

It is found in the cell membrane. The catalysed reaction is a 1,2-diacyl-sn-glycero-3-phospho-L-serine + H(+) = a 1,2-diacyl-sn-glycero-3-phosphoethanolamine + CO2. The protein operates within phospholipid metabolism; phosphatidylethanolamine biosynthesis; phosphatidylethanolamine from CDP-diacylglycerol: step 2/2. In terms of biological role, catalyzes the formation of phosphatidylethanolamine (PtdEtn) from phosphatidylserine (PtdSer). In Xylella fastidiosa (strain M12), this protein is Phosphatidylserine decarboxylase proenzyme.